A 685-amino-acid polypeptide reads, in one-letter code: Translation initiation factor IF-2 (685 aa).

Residues 60 to 79 (ISLAKTREPSKEKTEAKKPP) form a disordered region. The segment covering 64 to 79 (KTREPSKEKTEAKKPP) has biased composition (basic and acidic residues). A tr-type G domain is found at 175–352 (NRPPVVTVMG…DIRCIPDSPV (178 aa)). Residues 184–191 (GHVDHGKT) are G1. GTP is bound at residue 184–191 (GHVDHGKT). The interval 209 to 213 (GITQS) is G2. The tract at residues 230 to 233 (DTPG) is G3. GTP contacts are provided by residues 230-234 (DTPGH) and 284-287 (NKID). The tract at residues 284 to 287 (NKID) is G4. The segment at 321–323 (SAR) is G5.

This sequence belongs to the TRAFAC class translation factor GTPase superfamily. Classic translation factor GTPase family. IF-2 subfamily.

Its subcellular location is the cytoplasm. In terms of biological role, one of the essential components for the initiation of protein synthesis. Protects formylmethionyl-tRNA from spontaneous hydrolysis and promotes its binding to the 30S ribosomal subunits. Also involved in the hydrolysis of GTP during the formation of the 70S ribosomal complex. In Fervidobacterium nodosum (strain ATCC 35602 / DSM 5306 / Rt17-B1), this protein is Translation initiation factor IF-2.